The following is a 391-amino-acid chain: Transmembrane protein 79 (391 aa).

The tract at residues 1–114 (MTEPETLALL…TKSEEPFKED (114 aa)) is disordered. Over 1 to 200 (MTEPETLALL…GREALRAVAS (200 aa)) the chain is Cytoplasmic. Residues 103–114 (APTKSEEPFKED) are compositionally biased toward basic and acidic residues. The chain crosses the membrane as a helical span at residues 201–221 (VVAALIFFPCLLYGAYAFLPF). The Extracellular portion of the chain corresponds to 222-240 (DAPRLPTMSSRLVYTLRCG). The helical transmembrane segment at 241-261 (VFATFPIVLGLLVYGLSLLCF) threads the bilayer. The Cytoplasmic portion of the chain corresponds to 262 to 279 (SALRPFGEPRREVEIHRQ). The chain crosses the membrane as a helical span at residues 280–300 (YVAQSVQLFILYFFNLAVLST). At 301–309 (YLPQDTLKL) the chain is on the extracellular side. The helical transmembrane segment at 310–330 (LPLLTGLFAISRLIYWLTFAV) threads the bilayer. The Cytoplasmic portion of the chain corresponds to 331 to 339 (GRSFRGFGY). Residues 340–360 (GLTFLPLLAMLVWNLYYMFVV) form a helical membrane-spanning segment. Residues 361 to 391 (EPERMLTASESRLDYPDHARSVSDYRPRSWG) lie on the Extracellular side of the membrane.

In terms of tissue distribution, expressed in the epidermis of the skin. Expressed in epithelial cells of the outermost layer of the stratum granulosum (SG) and in hair follicles (at protein level).

It localises to the lysosome. Its subcellular location is the golgi apparatus. The protein localises to the trans-Golgi network. It is found in the membrane. In terms of biological role, contributes to the epidermal integrity and skin barrier function. Plays a role in the lamellar granule (LG) secretory system and in the stratum corneum (SC) epithelial cell formation. The protein is Transmembrane protein 79 (Tmem79) of Mus musculus (Mouse).